A 417-amino-acid polypeptide reads, in one-letter code: Serine hydroxymethyltransferase (417 aa).

(6S)-5,6,7,8-tetrahydrofolate-binding positions include leucine 112 and 116–118 (GHL). At lysine 221 the chain carries N6-(pyridoxal phosphate)lysine. (6S)-5,6,7,8-tetrahydrofolate is bound at residue glutamate 247.

It belongs to the SHMT family. Homodimer. Pyridoxal 5'-phosphate serves as cofactor.

It localises to the cytoplasm. It catalyses the reaction (6R)-5,10-methylene-5,6,7,8-tetrahydrofolate + glycine + H2O = (6S)-5,6,7,8-tetrahydrofolate + L-serine. Its pathway is one-carbon metabolism; tetrahydrofolate interconversion. It functions in the pathway amino-acid biosynthesis; glycine biosynthesis; glycine from L-serine: step 1/1. Its function is as follows. Catalyzes the reversible interconversion of serine and glycine with tetrahydrofolate (THF) serving as the one-carbon carrier. This reaction serves as the major source of one-carbon groups required for the biosynthesis of purines, thymidylate, methionine, and other important biomolecules. Also exhibits THF-independent aldolase activity toward beta-hydroxyamino acids, producing glycine and aldehydes, via a retro-aldol mechanism. This Borrelia recurrentis (strain A1) protein is Serine hydroxymethyltransferase.